We begin with the raw amino-acid sequence, 246 residues long: Orotidine 5'-phosphate decarboxylase (246 aa).

Substrate contacts are provided by residues Asp-22, Lys-44, 71–80 (DLKFHDIPNT), Thr-131, Arg-192, Gln-201, Gly-221, and Arg-222. Lys-73 acts as the Proton donor in catalysis.

Belongs to the OMP decarboxylase family. Type 1 subfamily. Homodimer.

It carries out the reaction orotidine 5'-phosphate + H(+) = UMP + CO2. The protein operates within pyrimidine metabolism; UMP biosynthesis via de novo pathway; UMP from orotate: step 2/2. Its function is as follows. Catalyzes the decarboxylation of orotidine 5'-monophosphate (OMP) to uridine 5'-monophosphate (UMP). The polypeptide is Orotidine 5'-phosphate decarboxylase (Yersinia enterocolitica serotype O:8 / biotype 1B (strain NCTC 13174 / 8081)).